A 433-amino-acid polypeptide reads, in one-letter code: Pectinesterase B (433 aa).

The signal sequence occupies residues 1–21 (MSLTHYSGLAAAVSMSLILTA). The N-palmitoyl cysteine moiety is linked to residue Cys22. Cys22 is lipidated: S-diacylglycerol cysteine. At 22 to 433 (CGGQTPNSAR…EYNTQVLLHE (412 aa)) the chain is on the periplasmic side. Residues Thr202 and Gln236 each contribute to the substrate site. Asp259 functions as the Proton donor in the catalytic mechanism. The active-site Nucleophile is the Asp292. The substrate site is built by Arg356 and Trp358.

Belongs to the pectinesterase family.

It localises to the cell outer membrane. It carries out the reaction [(1-&gt;4)-alpha-D-galacturonosyl methyl ester](n) + n H2O = [(1-&gt;4)-alpha-D-galacturonosyl](n) + n methanol + n H(+). The protein operates within glycan metabolism; pectin degradation; 2-dehydro-3-deoxy-D-gluconate from pectin: step 1/5. Functionally, probably involved in the degradation of methylated oligogalacturonides present in the periplasm. More active on methylated oligogalacturides than on pectin. This Dickeya dadantii (strain 3937) (Erwinia chrysanthemi (strain 3937)) protein is Pectinesterase B.